Consider the following 289-residue polypeptide: Undecaprenyl-diphosphatase (289 aa).

8 helical membrane passes run 23–43 (LFLG…TAHL), 56–76 (GVAV…AYFW), 104–124 (SAIV…KLFW), 135–155 (IPAI…AENV), 165–185 (LSFW…IPGV), 210–230 (FLLG…QAFG), 235–255 (VDVF…WIAI), and 269–289 (IFIT…YLAF).

The protein belongs to the UppP family.

Its subcellular location is the cell inner membrane. It catalyses the reaction di-trans,octa-cis-undecaprenyl diphosphate + H2O = di-trans,octa-cis-undecaprenyl phosphate + phosphate + H(+). Catalyzes the dephosphorylation of undecaprenyl diphosphate (UPP). Confers resistance to bacitracin. This is Undecaprenyl-diphosphatase from Prochlorococcus marinus (strain SARG / CCMP1375 / SS120).